We begin with the raw amino-acid sequence, 387 residues long: 1-deoxy-D-xylulose 5-phosphate reductoisomerase (387 aa).

The NADPH site is built by Thr-10, Gly-11, Ser-12, Ile-13, Gly-36, Arg-37, and Asn-124. Lys-125 provides a ligand contact to 1-deoxy-D-xylulose 5-phosphate. Glu-126 contacts NADPH. Asp-150 serves as a coordination point for Mn(2+). Residues Ser-151, Glu-152, Ser-176, and His-199 each contribute to the 1-deoxy-D-xylulose 5-phosphate site. Glu-152 is a Mn(2+) binding site. Residue Gly-205 participates in NADPH binding. Positions 212, 217, 218, and 221 each coordinate 1-deoxy-D-xylulose 5-phosphate. Glu-221 is a Mn(2+) binding site.

Belongs to the DXR family. Mg(2+) is required as a cofactor. It depends on Mn(2+) as a cofactor.

The enzyme catalyses 2-C-methyl-D-erythritol 4-phosphate + NADP(+) = 1-deoxy-D-xylulose 5-phosphate + NADPH + H(+). Its pathway is isoprenoid biosynthesis; isopentenyl diphosphate biosynthesis via DXP pathway; isopentenyl diphosphate from 1-deoxy-D-xylulose 5-phosphate: step 1/6. Catalyzes the NADPH-dependent rearrangement and reduction of 1-deoxy-D-xylulose-5-phosphate (DXP) to 2-C-methyl-D-erythritol 4-phosphate (MEP). This is 1-deoxy-D-xylulose 5-phosphate reductoisomerase from Cyanothece sp. (strain PCC 7425 / ATCC 29141).